A 212-amino-acid chain; its full sequence is Ribonuclease P protein component 3 (212 aa).

The protein belongs to the eukaryotic/archaeal RNase P protein component 3 family. In terms of assembly, consists of a catalytic RNA component and at least 5 protein subunits. Forms a heterotetrameric subcomplex with Rnp2. Reconstituted enzyme missing individual protein subunits is suboptimally active, showing each subunit contributes to optimization of activity.

It localises to the cytoplasm. The catalysed reaction is Endonucleolytic cleavage of RNA, removing 5'-extranucleotides from tRNA precursor.. Its function is as follows. Part of ribonuclease P, a protein complex that generates mature tRNA molecules by cleaving their 5'-ends. Not absolutely essential for activity in vitro, however it strongly stimulates activity. Binds RNase P RNA. This is Ribonuclease P protein component 3 from Pyrococcus horikoshii (strain ATCC 700860 / DSM 12428 / JCM 9974 / NBRC 100139 / OT-3).